Reading from the N-terminus, the 302-residue chain is Recombination-associated protein RdgC (302 aa).

It belongs to the RdgC family.

It is found in the cytoplasm. The protein localises to the nucleoid. Its function is as follows. May be involved in recombination. The protein is Recombination-associated protein RdgC of Actinobacillus pleuropneumoniae serotype 5b (strain L20).